The sequence spans 418 residues: MNKSVAPLLLAASILYGGAAAQQTVWGQCGGIGWSGPTNCAPGSACSTLNPYYAQCIPGATTITTSTRPPSGPTTTTRATSTSSSTPPTSSGVRFAGVNIAGFDFGCTTDGTCVTSKVYPPLKNFTGSNNYPDGIGQMQHFVNDDGMTIFRLPVGWQYLVNNNLGGNLDSTSISKYDQLVQGCLSLGAYCIVDIHNYARWNGGIIGQGGPTNAQFTSLWSQLASKYASQSRVWFGIMNEPHDVNINTWAATVQEVVTAIRNAGATSQFISLPGNDWQSAGAFISDGSAAALSQVTNPDGSTTNLIFDVHKYLDSDNSGTHAECTTNNIDGAFSPLATWLRQNNRQAILTETGGGNVQSCIQDMCQQIQYLNQNSDVYLGYVGWGAGSFDSTYVLTETPTGSGNSWTDTSLVSSCLARK.

Residues 1–21 (MNKSVAPLLLAASILYGGAAA) form the signal peptide. A Pyrrolidone carboxylic acid modification is found at Gln-22. Positions 22–57 (QQTVWGQCGGIGWSGPTNCAPGSACSTLNPYYAQCI) constitute a CBM1 domain. Residues 58-91 (PGATTITTSTRPPSGPTTTTRATSTSSSTPPTSS) are linker. The interval 63–91 (ITTSTRPPSGPTTTTRATSTSSSTPPTSS) is disordered. The interval 92-418 (GVRFAGVNIA…SLVSSCLARK (327 aa)) is catalytic. The cysteines at positions 107 and 113 are disulfide-linked. A glycan (N-linked (GlcNAc) asparagine) is linked at Asn-124. Cys-183 and Cys-190 are oxidised to a cystine. Catalysis depends on Glu-239, which acts as the Proton donor/acceptor. Intrachain disulfides connect Cys-323-Cys-359 and Cys-364-Cys-414. Glu-350 (nucleophile) is an active-site residue.

The protein belongs to the glycosyl hydrolase 5 (cellulase A) family.

The protein resides in the secreted. It carries out the reaction Endohydrolysis of (1-&gt;4)-beta-D-glucosidic linkages in cellulose, lichenin and cereal beta-D-glucans.. Endoglucanase (EG) that cleaves the internal beta-1,4-glucosidic bonds in cellulose. The degradation of cellulose involves an interplay between different cellulolytic enzymes. Hydrolysis starts with EGs, which cut internal glycosidic linkages to reduce the polymerization degree of the substrate and creates new chain ends for exocellobiohydrolases (CBHs). The CBH release the disaccharide cellobiose from the non-reducing end of the cellulose polymer chain. Finally, beta-1,4-glucosidases hydrolyze the cellobiose and other short cello-oligosaccharides into glucose units. The chain is Endoglucanase EG-II (egl2) from Hypocrea jecorina (strain ATCC 56765 / BCRC 32924 / NRRL 11460 / Rut C-30) (Trichoderma reesei).